The primary structure comprises 37 residues: Large ribosomal subunit protein bL36 (37 aa).

The protein belongs to the bacterial ribosomal protein bL36 family.

The sequence is that of Large ribosomal subunit protein bL36 from Rhodococcus erythropolis (strain PR4 / NBRC 100887).